A 178-amino-acid chain; its full sequence is C-phycoerythrin class 2 subunit beta (178 aa).

Residues C50 and C61 each coordinate phycourobilin. Residues C82 and C159 each contribute to the (2R,3E)-phycoerythrobilin site.

Belongs to the phycobiliprotein family. As to quaternary structure, heterodimer of an alpha and a beta chain. Contains two covalently linked phycoerythrobilin chromophores and one covalently linked phycourobilin chromophore.

The protein localises to the cellular thylakoid membrane. In terms of biological role, light-harvesting photosynthetic bile pigment-protein from the phycobiliprotein complex. The protein is C-phycoerythrin class 2 subunit beta (mpeB) of Synechococcus sp. (strain WH8020).